Here is a 420-residue protein sequence, read N- to C-terminus: L-glutamine:2-deoxy-scyllo-inosose aminotransferase (420 aa).

Lys-201 bears the N6-(pyridoxal phosphate)lysine mark.

It belongs to the DegT/DnrJ/EryC1 family. L-glutamine:2-deoxy-scyllo-inosose/scyllo-inosose aminotransferase subfamily. The cofactor is pyridoxal 5'-phosphate.

The catalysed reaction is 2-deoxy-L-scyllo-inosose + L-glutamine = 2-deoxy-scyllo-inosamine + 2-oxoglutaramate. It carries out the reaction 3-amino-2,3-dideoxy-scyllo-inosose + L-glutamine = 2-deoxystreptamine + 2-oxoglutaramate. The protein operates within metabolic intermediate biosynthesis; 2-deoxystreptamine biosynthesis; 2-deoxystreptamine from D-glucose 6-phosphate: step 2/4. It participates in antibiotic biosynthesis; gentamicin biosynthesis. Functionally, catalyzes the PLP-dependent transamination of 2-deoxy-scyllo-inosose (2-DOI) to form 2-deoxy-scyllo-inosamine (2-DOIA) using L-glutamine as the amino donor. Also catalyzes the transamination of 3-amino-2,3-dideoxy-scyllo-inosose (keto-2-DOIA) into 2-deoxystreptamine (2-DOS). The protein is L-glutamine:2-deoxy-scyllo-inosose aminotransferase (gntA) of Micromonospora echinospora (Micromonospora purpurea).